Reading from the N-terminus, the 312-residue chain is Ribosomal protein uL3 glutamine methyltransferase (312 aa).

The protein belongs to the protein N5-glutamine methyltransferase family. PrmB subfamily.

It catalyses the reaction L-glutaminyl-[ribosomal protein uL3] + S-adenosyl-L-methionine = N(5)-methyl-L-glutaminyl-[ribosomal protein uL3] + S-adenosyl-L-homocysteine + H(+). Its function is as follows. Methylates large ribosomal subunit protein uL3 on a specific glutamine residue. This Xylella fastidiosa (strain Temecula1 / ATCC 700964) protein is Ribosomal protein uL3 glutamine methyltransferase.